The primary structure comprises 356 residues: Homoserine O-acetyltransferase (356 aa).

In terms of domain architecture, AB hydrolase-1 spans 50–335 (NVILVCHALT…DEPYGHDAFL (286 aa)). The active-site Nucleophile is Ser146. Arg215 contributes to the substrate binding site. Residues Asp302 and His331 contribute to the active site. Asp332 provides a ligand contact to substrate.

This sequence belongs to the AB hydrolase superfamily. MetX family. As to quaternary structure, homodimer.

The protein localises to the cytoplasm. The catalysed reaction is L-homoserine + acetyl-CoA = O-acetyl-L-homoserine + CoA. The protein operates within amino-acid biosynthesis; L-methionine biosynthesis via de novo pathway; O-acetyl-L-homoserine from L-homoserine: step 1/1. Transfers an acetyl group from acetyl-CoA to L-homoserine, forming acetyl-L-homoserine. This Chlorobaculum tepidum (strain ATCC 49652 / DSM 12025 / NBRC 103806 / TLS) (Chlorobium tepidum) protein is Homoserine O-acetyltransferase.